A 353-amino-acid polypeptide reads, in one-letter code: Mitochondrial import inner membrane translocase subunit TIM50 (353 aa).

A mitochondrion-targeting transit peptide spans 1-21 (MAASAALFSRLRSGLRVGARG). Residues 22 to 65 (LCTRLAPPPPRTPEQVTEIANRGGSKAQGPQHQPGSEGPSYAKK) are Mitochondrial matrix-facing. Positions 24 to 59 (TRLAPPPPRTPEQVTEIANRGGSKAQGPQHQPGSEG) are disordered. A helical transmembrane segment spans residues 66-86 (IALWIAGLLGAGGTVSIVYIF). The Mitochondrial intermembrane segment spans residues 87-353 (GNNPVDENGT…SRLWPRSKQP (267 aa)). One can recognise an FCP1 homology domain in the interval 143–286 (YYQPPYTLVL…LDLSAFLKTI (144 aa)). S341 bears the Phosphoserine mark.

The protein belongs to the TIM50 family. Component of the TIM23 complex at least composed of TIMM23, TIMM17 (TIMM17A or TIMM17B) and TIMM50; within this complex, directly interacts with TIMM23. The complex interacts with the TIMM44 component of the PAM complex and with DNAJC15.

The protein resides in the mitochondrion inner membrane. In terms of biological role, essential component of the TIM23 complex, a complex that mediates the translocation of transit peptide-containing proteins across the mitochondrial inner membrane. Has some phosphatase activity in vitro; however such activity may not be relevant in vivo. The polypeptide is Mitochondrial import inner membrane translocase subunit TIM50 (Timm50) (Mus musculus (Mouse)).